The chain runs to 76 residues: Proteolipid protein 2 (76 aa).

An MARVEL domain is found at 1-60 (ISGPWSDFFRALGAVILYLMTSIVVLVERGNNSKGAAGVLGLCAAGLFGYDAYITFPSGT). Residues 8 to 28 (FFRALGAVILYLMTSIVVLVE) form a helical membrane-spanning segment. An N-linked (GlcNAc...) asparagine glycan is attached at Asn31. Residues 36–56 (AAGVLGLCAAGLFGYDAYITF) traverse the membrane as a helical segment.

The protein localises to the membrane. Functionally, may play a role in cell differentiation in the intestinal epithelium. The chain is Proteolipid protein 2 (PLP2) from Ovis aries (Sheep).